The primary structure comprises 814 residues: MSTVLCCVLVLLISVALCMDFEERPSSSWRSEQTMFLKSHKSRNLLSLRDLQQPDHGKMKRSEESAQNQCESLHGYQSTLQNDTHTHNFNDLSGSVSLAWVGDGTGVLLVLTTFQVPLFIMRFGQSKLYRSEDYGKTFQDITDLINNTFIQTEFGIAIGPDNSGKVILTGDLAEGKVTKIFRSVDFGKSFVTSELPFHPLMQITYNPKDSNILMVYSINYDLWLSKDFGANWKKIHESVCLVKWGIDDTIFLTTNPNGSCSDRGTLELRKSLDYGKTFKTIGNRIYSFGLGGRFVFASIMTDSGSTRMIHVSVDQGETWDMAQLPTVGHEQFYSILAANNDMVFMHVDEPGDSGIGTIYISDDRGIVFSKSLERHLYTTTGGDTDFTNITSLRGVYITSVLAEDGSVQTVITFNQGGEWRPLMKPWNGVCDSTAKHPSECSLHIHASYSISMKLNVPMQPLSETNAVGLVLAHGSVGGAVSVLSPDVYVSDDGGYTWFQALKGPHHYAILDSGGLLVAVEHNPTHPISQIKFSTDEGQCWHAHNFTDDPIYFTGLASEPGARSMNVSLWGYRDTILNQYWVSVTVDFRQLLSRDCQENDYIQWLAHSSDINSPTDGCVLGYKERFLRLRRDSVCWNGRDYKVTKEPTTCPCTLTDFHDFGFYHEENSSVCVEQPDLIGHSLEFCLHGRKEQLQTSGYRKIPGDHCEEGITPERKEIDLSKKCVSNLLRTEQLTKEHSFNSAPIIAVVIIVLLISAVAGVIFIKKYVCGGRFLVHRYSVLQQHAEANGIDGLDDLDTLEGGKTHYHDDSDEDLLE.

A signal peptide spans 1-18; that stretch reads MSTVLCCVLVLLISVALC. Over 19–741 the chain is Extracellular; sequence MDFEERPSSS…LTKEHSFNSA (723 aa). Cystine bridges form between cysteine 70–cysteine 539, cysteine 240–cysteine 260, and cysteine 430–cysteine 440. Asparagine 82 is a glycosylation site (N-linked (GlcNAc...) asparagine). The BNR 1 repeat unit spans residues 129 to 140; that stretch reads YRSEDYGKTFQD. Residue asparagine 146 is glycosylated (N-linked (GlcNAc...) asparagine). BNR repeat units follow at residues 181–192 and 223–234; these read FRSVDFGKSFVT and WLSKDFGANWKK. A glycan (N-linked (GlcNAc...) asparagine) is linked at asparagine 257. 3 BNR repeats span residues 269–280, 310–321, and 359–370; these read RKSLDYGKTFKT, HVSVDQGETWDM, and YISDDRGIVFSK. A glycan (N-linked (GlcNAc...) asparagine) is linked at asparagine 388. Residues 410 to 421 form a BNR 7 repeat; the sequence is VITFNQGGEWRP. BNR repeat units lie at residues 488–499 and 531–542; these read YVSDDGGYTWFQ and KFSTDEGQCWHA. 2 N-linked (GlcNAc...) asparagine glycosylation sites follow: asparagine 544 and asparagine 565. 4 disulfides stabilise this stretch: cysteine 595/cysteine 634, cysteine 617/cysteine 649, cysteine 651/cysteine 705, and cysteine 684/cysteine 722. A glycan (N-linked (GlcNAc...) asparagine) is linked at asparagine 666. Residues 742–762 form a helical membrane-spanning segment; that stretch reads PIIAVVIIVLLISAVAGVIFI. Residues 763–814 are Cytoplasmic-facing; that stretch reads KKYVCGGRFLVHRYSVLQQHAEANGIDGLDDLDTLEGGKTHYHDDSDEDLLE. Residue cysteine 767 is the site of S-palmitoyl cysteine attachment. The short motif at 771 to 776 is the Endocytosis signal element; the sequence is FLVHRY.

The protein belongs to the VPS10-related sortilin family. SORT1 subfamily. Interacts with the cytosolic adapter proteins GGA1 and GGA2. Interacts with the heterotrimeric retromer cargo-selective complex (CSC), also described as vacuolar protein sorting subcomplex (VPS), formed by VPS26 (VPS26A or VPS26B), VPS29 and VPS35; which is involved in retrograde trafficking of the receptor from endosomes to the Golgi apparatus. Post-translationally, palmitoylated. Undergoes cysteine S-palmitoylation which promotes the partitioning of the receptor into an endosomal membrane subdomain where it can interact with the retromer cargo-selective complex which mediates its retrograde trafficking to the Golgi apparatus.

The protein resides in the golgi apparatus. It is found in the golgi stack membrane. Its subcellular location is the endosome membrane. The protein localises to the endoplasmic reticulum membrane. It localises to the nucleus membrane. The protein resides in the cell membrane. It is found in the lysosome membrane. In terms of biological role, functions as a sorting receptor in the Golgi compartment and as a clearance receptor on the cell surface. Required for protein transport from the Golgi apparatus to the lysosomes by a pathway that is independent of the mannose-6-phosphate receptor (M6PR). Lysosomal proteins bind specifically to the receptor in the Golgi apparatus and the resulting receptor-ligand complex is transported to an acidic prelysosomal compartment where the low pH mediates the dissociation of the complex. The receptor is then recycled back to the Golgi for another round of trafficking through its binding to the retromer. Also required for protein transport from the Golgi apparatus to the endosomes. May also mediate transport from the endoplasmic reticulum to the Golgi. This Danio rerio (Zebrafish) protein is Sortilin (sort1).